We begin with the raw amino-acid sequence, 417 residues long: Serine/threonine-protein kinase PkaB (417 aa).

One can recognise a Protein kinase domain in the interval Tyr9–Leu270. Residues Leu15–Val23 and Lys36 contribute to the ATP site. Asp130 (proton acceptor) is an active-site residue. Disordered regions lie at residues Leu279–Thr371 and Leu395–Pro417. The span at Asp280 to Pro293 shows a compositional bias: acidic residues. Low complexity-rich tracts occupy residues Asp294 to Glu308 and Gly349 to Arg368. Positions Asp408–Pro417 are enriched in polar residues.

Belongs to the protein kinase superfamily. Ser/Thr protein kinase family. Post-translationally, autophosphorylated mainly at Thr.

It catalyses the reaction L-seryl-[protein] + ATP = O-phospho-L-seryl-[protein] + ADP + H(+). The enzyme catalyses L-threonyl-[protein] + ATP = O-phospho-L-threonyl-[protein] + ADP + H(+). The polypeptide is Serine/threonine-protein kinase PkaB (pkaB) (Streptomyces coelicolor (strain ATCC BAA-471 / A3(2) / M145)).